The sequence spans 475 residues: UDP-N-acetylmuramate--L-alanine ligase (475 aa).

Gly-125–Thr-131 provides a ligand contact to ATP.

It belongs to the MurCDEF family.

Its subcellular location is the cytoplasm. It catalyses the reaction UDP-N-acetyl-alpha-D-muramate + L-alanine + ATP = UDP-N-acetyl-alpha-D-muramoyl-L-alanine + ADP + phosphate + H(+). Its pathway is cell wall biogenesis; peptidoglycan biosynthesis. Functionally, cell wall formation. This Actinobacillus pleuropneumoniae serotype 7 (strain AP76) protein is UDP-N-acetylmuramate--L-alanine ligase.